We begin with the raw amino-acid sequence, 525 residues long: GMP synthase [glutamine-hydrolyzing] (525 aa).

Residues 9-207 (RILILDFGSQ…VLQLCACEKL (199 aa)) form the Glutamine amidotransferase type-1 domain. Cysteine 86 functions as the Nucleophile in the catalytic mechanism. Catalysis depends on residues histidine 181 and glutamate 183. The GMPS ATP-PPase domain maps to 208 to 400 (WTPANIVEDA…LGLPYDMVYR (193 aa)). Position 235-241 (235-241 (SGGVDSS)) interacts with ATP.

In terms of assembly, homodimer.

It carries out the reaction XMP + L-glutamine + ATP + H2O = GMP + L-glutamate + AMP + diphosphate + 2 H(+). It participates in purine metabolism; GMP biosynthesis; GMP from XMP (L-Gln route): step 1/1. Functionally, catalyzes the synthesis of GMP from XMP. This Cellvibrio japonicus (strain Ueda107) (Pseudomonas fluorescens subsp. cellulosa) protein is GMP synthase [glutamine-hydrolyzing].